Reading from the N-terminus, the 206-residue chain is MTSFEEEQLRDHAVANLYRIGAIRFGDFNLSDGQKTHIYVDMRPVISCPDVLQTIASLIWRLRPSFNSSLLCGVPYTALALATCISLKYNISMVLRRKELKHSSQEDRIKVEGLFSSGQTCLVINDVIASGRSILETAKALEDEGLNIRESLVFLDRQVGGEAVLKEAGIKLRSVFTLEDLVKSLLSKCELKDTDAAMASALIKNL.

Residues Arg97, Lys98, Lys101, and Asn125–Ser133 contribute to the 5-phospho-alpha-D-ribose 1-diphosphate site. Position 157 (Arg157) interacts with orotate.

Belongs to the purine/pyrimidine phosphoribosyltransferase family. PyrE subfamily. As to quaternary structure, homodimer. Requires Mg(2+) as cofactor.

It carries out the reaction orotidine 5'-phosphate + diphosphate = orotate + 5-phospho-alpha-D-ribose 1-diphosphate. It functions in the pathway pyrimidine metabolism; UMP biosynthesis via de novo pathway; UMP from orotate: step 1/2. Its function is as follows. Catalyzes the transfer of a ribosyl phosphate group from 5-phosphoribose 1-diphosphate to orotate, leading to the formation of orotidine monophosphate (OMP). The chain is Orotate phosphoribosyltransferase from Chlamydia felis (strain Fe/C-56) (Chlamydophila felis).